The primary structure comprises 274 residues: MSGKAYFVNGEHGPAIIEGPLTALNWLTILPVPSATAFDRVTGGRVMASVPFIGIVLGIVGGAIAFAATSLGVASIVAATVIVCFWELFTRFMHLDGLADVSDALGSYAPPARAREIIADPATGLIGMGACLISILIHISSFTALLDAHLWWMVMITPMIGRFCAIFGAHSRLKPMNPTGFGAMLIGTVKTHTIIAWLCVLLVICIGVPLAMDRGELITITILGLLCSVTLALVEIRHLHRRFEGMNGDTTGFIMHSATALCALVFAVGVGIVA.

7 helical membrane passes run Val-46–Phe-66, Thr-69–Phe-89, Ile-117–Ile-137, Trp-151–Leu-173, His-192–Met-212, Glu-216–Ile-236, and Phe-253–Val-273.

It belongs to the CobS family. The cofactor is Mg(2+).

The protein localises to the cell membrane. The enzyme catalyses alpha-ribazole + adenosylcob(III)inamide-GDP = adenosylcob(III)alamin + GMP + H(+). The catalysed reaction is alpha-ribazole 5'-phosphate + adenosylcob(III)inamide-GDP = adenosylcob(III)alamin 5'-phosphate + GMP + H(+). Its pathway is cofactor biosynthesis; adenosylcobalamin biosynthesis; adenosylcobalamin from cob(II)yrinate a,c-diamide: step 7/7. Its function is as follows. Joins adenosylcobinamide-GDP and alpha-ribazole to generate adenosylcobalamin (Ado-cobalamin). Also synthesizes adenosylcobalamin 5'-phosphate from adenosylcobinamide-GDP and alpha-ribazole 5'-phosphate. The protein is Adenosylcobinamide-GDP ribazoletransferase of Corynebacterium diphtheriae (strain ATCC 700971 / NCTC 13129 / Biotype gravis).